A 340-amino-acid chain; its full sequence is Phosphate acyltransferase (340 aa).

This sequence belongs to the PlsX family. In terms of assembly, homodimer. Probably interacts with PlsY.

The protein resides in the cytoplasm. It carries out the reaction a fatty acyl-[ACP] + phosphate = an acyl phosphate + holo-[ACP]. It functions in the pathway lipid metabolism; phospholipid metabolism. Its function is as follows. Catalyzes the reversible formation of acyl-phosphate (acyl-PO(4)) from acyl-[acyl-carrier-protein] (acyl-ACP). This enzyme utilizes acyl-ACP as fatty acyl donor, but not acyl-CoA. The sequence is that of Phosphate acyltransferase from Marinobacter nauticus (strain ATCC 700491 / DSM 11845 / VT8) (Marinobacter aquaeolei).